The primary structure comprises 422 residues: Protein MANNAN SYNTHESIS-RELATED 1 (422 aa).

The Cytoplasmic segment spans residues 1 to 6 (MGVDLR). A helical; Signal-anchor for type II membrane protein membrane pass occupies residues 7–26 (QVVAGILTITMFVMLGQMLH). Topologically, residues 27–422 (RDYFDSLQEK…KNHLAYSCFC (396 aa)) are lumenal. Substrate is bound at residue 263-265 (DLR).

It belongs to the glycosyltransferase GT106 family. As to expression, widely expressed.

It localises to the golgi apparatus membrane. Its pathway is glycan biosynthesis. Its function is as follows. Glycosyltransferase involved in mannan biosynthesis. The chain is Protein MANNAN SYNTHESIS-RELATED 1 from Arabidopsis thaliana (Mouse-ear cress).